Consider the following 273-residue polypeptide: Putative pyruvate, phosphate dikinase regulatory protein (273 aa).

149–156 (GPSRTSKT) serves as a coordination point for ADP.

It belongs to the pyruvate, phosphate/water dikinase regulatory protein family. PDRP subfamily.

It catalyses the reaction N(tele)-phospho-L-histidyl/L-threonyl-[pyruvate, phosphate dikinase] + ADP = N(tele)-phospho-L-histidyl/O-phospho-L-threonyl-[pyruvate, phosphate dikinase] + AMP + H(+). It carries out the reaction N(tele)-phospho-L-histidyl/O-phospho-L-threonyl-[pyruvate, phosphate dikinase] + phosphate + H(+) = N(tele)-phospho-L-histidyl/L-threonyl-[pyruvate, phosphate dikinase] + diphosphate. Functionally, bifunctional serine/threonine kinase and phosphorylase involved in the regulation of the pyruvate, phosphate dikinase (PPDK) by catalyzing its phosphorylation/dephosphorylation. The sequence is that of Putative pyruvate, phosphate dikinase regulatory protein from Rickettsia massiliae (strain Mtu5).